Here is a 211-residue protein sequence, read N- to C-terminus: Endo-1,4-beta-xylanase 5 (211 aa).

A signal peptide spans 1–16 (MKVTAAFASLLLTAFA). The GH11 domain maps to 19-210 (APEPVLVSRS…GVGSASVTIS (192 aa)). Glu-106 serves as the catalytic Nucleophile. Glu-197 serves as the catalytic Proton donor.

It belongs to the glycosyl hydrolase 11 (cellulase G) family.

Its subcellular location is the secreted. The catalysed reaction is Endohydrolysis of (1-&gt;4)-beta-D-xylosidic linkages in xylans.. Its pathway is glycan degradation; xylan degradation. Endo-1,4-beta-xylanase involved in the hydrolysis of xylan, a major structural heterogeneous polysaccharide found in plant biomass representing the second most abundant polysaccharide in the biosphere, after cellulose. This is Endo-1,4-beta-xylanase 5 (XYN5) from Aspergillus niger.